The primary structure comprises 30 residues: Putative alpha-amylase inhibitor (30 aa).

The protein belongs to the leguminous lectin family.

Its function is as follows. Lectin and alpha-amylase inhibitor. Acts as a defensive protein against insects. The polypeptide is Putative alpha-amylase inhibitor (Phaseolus vulgaris (Kidney bean)).